A 136-amino-acid chain; its full sequence is Large ribosomal subunit protein uL16 (136 aa).

The protein belongs to the universal ribosomal protein uL16 family. Part of the 50S ribosomal subunit.

Binds 23S rRNA and is also seen to make contacts with the A and possibly P site tRNAs. The chain is Large ribosomal subunit protein uL16 from Rickettsia canadensis (strain McKiel).